The chain runs to 144 residues: MASDKPLRLLLGFDYGTRQIGVAVGQAVTGQARELCVLKAQNGVPDWNRVEALIKEWQPDAIVVGLPLNMDGSPSEMSERAEKFGRRLNGRFNLPVFTHDERLTTYAAKGERLAQGQRDGYRERPVDALAAALLLEGWLAEHPD.

Belongs to the YqgF nuclease family.

Its subcellular location is the cytoplasm. Could be a nuclease involved in processing of the 5'-end of pre-16S rRNA. The chain is Putative pre-16S rRNA nuclease from Pseudomonas aeruginosa (strain LESB58).